The primary structure comprises 255 residues: MLRPLRKSVLASCRHCFKVCGGLPQKQLPLFSPLLLRARYSSTDSSTKRSNKSDKIDAPGFKKIFLVAIIGTVIFVKTVQSLDKNKPKTTLSEEEFENVVKGLKRRVAIFPQGEVDIKFSLSPSIEETRKVLQKSQGDDINELQFVDPVKVIDYYRTLRDDRYEALLNEYYKKYGCDTYAYNLPTGMLVMLLGRYFKENFKTGDKLVVVNFPHSIADATRFENEVSIVSKIFVPRKLSGSDVCKYYETVGKADII.

Residues 1–40 (MLRPLRKSVLASCRHCFKVCGGLPQKQLPLFSPLLLRARY) constitute a mitochondrion transit peptide. The chain crosses the membrane as a helical span at residues 64–82 (IFLVAIIGTVIFVKTVQSL).

The protein belongs to the AIM36 family.

The protein resides in the mitochondrion membrane. This Saccharomyces cerevisiae (strain ATCC 204508 / S288c) (Baker's yeast) protein is Altered inheritance of mitochondria protein 36, mitochondrial (AIM36).